We begin with the raw amino-acid sequence, 380 residues long: Cytochrome b (380 aa).

4 helical membrane-spanning segments follow: residues 33 to 53 (FGSLLGVCLMIQIMTGLFLAM), 77 to 98 (WLIRYLHANGASMFFICLFIHV), 113 to 133 (WNIGIILFLTTMATAFVGYVL), and 178 to 198 (FFAFHFILPFIITALVLVHLL). Residues His-83 and His-97 each coordinate heme b. The heme b site is built by His-182 and His-196. His-201 contacts a ubiquinone. 4 consecutive transmembrane segments (helical) span residues 226 to 246 (IKDLLGVLLLLMVLMILVLFF), 288 to 308 (LGGVLALILSILILAAFPFLN), 320 to 340 (ITQFLYWIFIANLLILTWIGG), and 347 to 367 (FTTIGQISSILYFTIIVVLMP).

Belongs to the cytochrome b family. In terms of assembly, the cytochrome bc1 complex contains 11 subunits: 3 respiratory subunits (MT-CYB, CYC1 and UQCRFS1), 2 core proteins (UQCRC1 and UQCRC2) and 6 low-molecular weight proteins (UQCRH/QCR6, UQCRB/QCR7, UQCRQ/QCR8, UQCR10/QCR9, UQCR11/QCR10 and a cleavage product of UQCRFS1). This cytochrome bc1 complex then forms a dimer. Requires heme b as cofactor.

Its subcellular location is the mitochondrion inner membrane. Its function is as follows. Component of the ubiquinol-cytochrome c reductase complex (complex III or cytochrome b-c1 complex) that is part of the mitochondrial respiratory chain. The b-c1 complex mediates electron transfer from ubiquinol to cytochrome c. Contributes to the generation of a proton gradient across the mitochondrial membrane that is then used for ATP synthesis. The sequence is that of Cytochrome b (MT-CYB) from Thomasomys ischyrus (Strong-tailed oldfield mouse).